A 420-amino-acid chain; its full sequence is 2,3-dimethylmalate dehydratase large subunit (420 aa).

[4Fe-4S] cluster is bound by residues Cys-301, Cys-361, and Cys-364.

Belongs to the aconitase/IPM isomerase family. LeuC type 2 subfamily. Heterodimer of a large and a small subunit. Requires [4Fe-4S] cluster as cofactor.

It catalyses the reaction (2R,3S)-2,3-dimethylmalate = dimethylmaleate + H2O. The protein operates within cofactor degradation; nicotinate degradation; propanoate and pyruvate from 6-hydroxynicotinate: step 7/8. This is 2,3-dimethylmalate dehydratase large subunit (dmdA) from Eubacterium barkeri (Clostridium barkeri).